A 242-amino-acid chain; its full sequence is ATP synthase subunit a (242 aa).

7 helical membrane passes run 23–43 (ISFTNCALFMILASLVSAVLL), 62–82 (VELIYNFVVGAIESNAGVGGL), 84–104 (YIPFVLSIFLFVLACNIIGIL), 113–133 (HVSVTLALSVVVCASVTVLGF), 143–163 (IFLPEGTPLWLAPMMVFIKLF), 176–196 (LAANMIAGHTIIAVIAEFVLK), and 201–221 (LAPLPFAFIMVLIAFEIFVAI).

This sequence belongs to the ATPase A chain family. As to quaternary structure, F-type ATPases have 2 components, CF(1) - the catalytic core - and CF(0) - the membrane proton channel. CF(1) has five subunits: alpha(3), beta(3), gamma(1), delta(1), epsilon(1). CF(0) has three main subunits: a(1), b(2) and c(9-12). The alpha and beta chains form an alternating ring which encloses part of the gamma chain. CF(1) is attached to CF(0) by a central stalk formed by the gamma and epsilon chains, while a peripheral stalk is formed by the delta and b chains.

It is found in the cell inner membrane. In terms of biological role, key component of the proton channel; it plays a direct role in the translocation of protons across the membrane. The sequence is that of ATP synthase subunit a from Anaplasma phagocytophilum (strain HZ).